The primary structure comprises 1526 residues: Probable autotransporter YpjA (1526 aa).

Residues 1–29 (MNRTSPYYCRRSVLSLLISALIYAPPGMA) form the signal peptide. Residues 1173-1223 (NSNWNLTNDVKPNPDPIPNPKPDPKPDPKPDPNPKPDPTPDPTPTPVPEKR) form a disordered region. A compositionally biased stretch (basic and acidic residues) spans 1194 to 1206 (PDPKPDPKPDPNP). Residues 1207 to 1219 (KPDPTPDPTPTPV) are compositionally biased toward pro residues. In terms of domain architecture, Autotransporter spans 1258–1526 (ASPHNNNVWG…NAVAGVNWSF (269 aa)).

The protein resides in the cell outer membrane. Upon overexpression shows increased adherence to polyvinyl chloride (PVC) plates, increased mature biofilm formation. In Escherichia coli (strain K12), this protein is Probable autotransporter YpjA (ypjA).